A 287-amino-acid chain; its full sequence is MLPATFKLCAGISYRHTRNMTGLRKNAMVAIHHELNMLAGPNPSSWISHVRRRSSLLSSRIEEEQGYNEAEVSYVKQGEEALQKSISILGDQDGWTTEIIAANGDKVLSKVLPDVGKVFKLEVLLDQRSDNLYGELVGNMEQMGDWNPNVKEVKILQKIGQETMVTHEVSGPTPGNVVGPRDFVSVRCAKRRGSTCFLAGMSTQHPTMPEQRGVVRAENGPTCIVMRPSADDPNKTKFTWLLSIDLKGWIPKTIINKVLSQTQVDFANHLRQRMADNSVSKEMAPAC.

A mitochondrion-targeting transit peptide spans 1 to 61 (MLPATFKLCA…RRSSLLSSRI (61 aa)). An START domain is found at 66-279 (GYNEAEVSYV…LRQRMADNSV (214 aa)).

In terms of assembly, may interact with TSPO.

It localises to the mitochondrion. The catalysed reaction is cholesterol(in) = cholesterol(out). Its pathway is steroid metabolism; cholesterol metabolism. Plays a key role in steroid hormone synthesis by enhancing the metabolism of cholesterol into pregnenolone. Mediates the transfer of cholesterol from the outer mitochondrial membrane to the inner mitochondrial membrane where it is cleaved to pregnenolone. In Salvelinus fontinalis (Brook trout), this protein is Steroidogenic acute regulatory protein, mitochondrial (star).